The chain runs to 405 residues: Secreted aspartic protease FUS4 (405 aa).

The first 24 residues, 1 to 24, serve as a signal peptide directing secretion; it reads MLAIATLHVALQVFGAFSLSHAAA. Residues 49 to 400 form the Peptidase A1 domain; sequence YLFNVTVGSP…NFEERSFGLA (352 aa). Asn-52, Asn-61, Asn-107, and Asn-123 each carry an N-linked (GlcNAc...) asparagine glycan. Cys-318 and Cys-356 form a disulfide bridge.

Belongs to the peptidase A1 family.

It localises to the secreted. In terms of biological role, secreted aspartic protease; part of the gene cluster that mediates the biosynthesis of the mycotoxin fusarin C. Within the cluster, FUS1, FUS2, FUS8 and FUS9 are sufficient for fusarin production. The other FUS cluster members are not essential for fusarin C biosynthesis. This Gibberella fujikuroi (strain CBS 195.34 / IMI 58289 / NRRL A-6831) (Bakanae and foot rot disease fungus) protein is Secreted aspartic protease FUS4.